The following is a 213-amino-acid chain: Nicotinamidase (213 aa).

The active-site Proton acceptor is D10. Residues D52, H54, and H86 each contribute to the Zn(2+) site. The active site involves K111. Catalysis depends on C156, which acts as the Nucleophile.

It belongs to the isochorismatase family.

It catalyses the reaction nicotinamide + H2O = nicotinate + NH4(+). The catalysed reaction is pyrazinamide + H2O = pyrazine-2-carboxylate + NH4(+). Its pathway is cofactor biosynthesis; nicotinate biosynthesis; nicotinate from nicotinamide: step 1/1. In terms of biological role, catalyzes the deamidation of nicotinamide (NAM) into nicotinate. Likely functions in the cyclical salvage pathway for production of NAD from nicotinamide. Its function is as follows. Is also able to hydrolyze the first-line antituberculous drug pyrazinamide (PZA) into pyrazinoic acid in vitro, but this reaction is not considered to be physiologically relevant. The sequence is that of Nicotinamidase from Escherichia coli (strain K12).